The following is an 87-amino-acid chain: MVNMKASMFLTFAGLVLLFVVCYASESEEKEFPKEMLSSIFAVDNDFKQEERDCAGYMRECKEKLRCSGYVCSSRWKWCVLPAPWRR.

A signal peptide spans 1-24 (MVNMKASMFLTFAGLVLLFVVCYA). Positions 25 to 52 (SESEEKEFPKEMLSSIFAVDNDFKQEER) are excised as a propeptide. Disulfide bonds link Cys-54-Cys-67 and Cys-61-Cys-72.

The protein belongs to the neurotoxin 10 (Hwtx-1) family. 51 (Hntx-8) subfamily. Hntx-8 sub-subfamily. As to expression, expressed by the venom gland.

The protein localises to the secreted. Functionally, ion channel inhibitor. In Cyriopagopus hainanus (Chinese bird spider), this protein is U3-theraphotoxin-Hhn1o.